A 540-amino-acid chain; its full sequence is Sesquiterpene synthase 15b (540 aa).

3 residues coordinate Mg(2+): D292, D296, and E445. The DDXXD motif motif lies at 292 to 296 (DDIYD).

Belongs to the terpene synthase family. Tpsa subfamily. It depends on Mg(2+) as a cofactor. Mn(2+) is required as a cofactor.

The catalysed reaction is (2E,6E)-farnesyl diphosphate = germacrene A + diphosphate. Its pathway is secondary metabolite biosynthesis; terpenoid biosynthesis. In terms of biological role, sesquiterpene synthase involved in the biosynthesis of volatile compounds. Mediates the conversion of (2E,6E)-farnesyl diphosphate (FPP) into germacrene A. The sequence is that of Sesquiterpene synthase 15b from Solanum habrochaites (Wild tomato).